Consider the following 777-residue polypeptide: Serine/threonine-protein kinase PTK2 (777 aa).

The interval 21–174 (NKLRGNNDST…ISSGSASSTN (154 aa)) is disordered. The span at 30–41 (TPAAAPAPVPTK) shows a compositional bias: low complexity. 2 stretches are compositionally biased toward polar residues: residues 50 to 61 (AHISRSASTNTP) and 83 to 133 (RRST…SQHM). A compositionally biased stretch (low complexity) spans 149-172 (SSVRGSSYSRHGSGSHISSGSASS). The region spanning 222-529 (DKDNKTIGSG…MEDLFNDPWF (308 aa)) is the Protein kinase domain. Residues 228–236 (IGSGGSSEV) and Lys252 contribute to the ATP site. Asp355 functions as the Proton acceptor in the catalytic mechanism. 2 disordered regions span residues 564–705 (DAHP…EITE) and 728–764 (SVSG…KKVV). 2 stretches are compositionally biased toward polar residues: residues 575-592 (TDTN…AGTH) and 648-672 (TNTT…TNEF). Low complexity predominate over residues 677-694 (NATTTDNDNVNTKATTAD). Positions 744-756 (NRSIHSNATSTGT) are enriched in polar residues.

It belongs to the protein kinase superfamily. Ser/Thr protein kinase family.

The catalysed reaction is L-seryl-[protein] + ATP = O-phospho-L-seryl-[protein] + ADP + H(+). It carries out the reaction L-threonyl-[protein] + ATP = O-phospho-L-threonyl-[protein] + ADP + H(+). This Candida glabrata (strain ATCC 2001 / BCRC 20586 / JCM 3761 / NBRC 0622 / NRRL Y-65 / CBS 138) (Yeast) protein is Serine/threonine-protein kinase PTK2 (PTK2).